Here is a 955-residue protein sequence, read N- to C-terminus: Anoctamin-4 (955 aa).

Residues 1 to 352 (MEASSSGITN…FGEKIGLYFA (352 aa)) are Extracellular-facing. Residues 72 to 100 (CKDDDSLLHPGNLTSTSDDASRLEAGGET) form a disordered region. 4 N-linked (GlcNAc...) asparagine glycosylation sites follow: Asn-83, Asn-105, Asn-257, and Asn-288. A helical membrane pass occupies residues 353 to 373 (WLGWYTGMLFPAAFIGLFVFL). The Cytoplasmic portion of the chain corresponds to 374–424 (YGVTTLDHSQVSKEVCQATDIIMCPVCDKYCPFMRLSDSCVYAKVTHLFDN). The chain crosses the membrane as a helical span at residues 425 to 445 (GATVFFAVFMAVWATVFLEFW). Topologically, residues 446–505 (KRRRAVIAYDWDLIDWEEEEEEIRPQFEAKYSKKERMNPISGKPEPYQAFTDKCSRLIVS) are extracellular. Residues 506 to 526 (ASGIFFMICVVIAAVFGIVIY) form a helical membrane-spanning segment. At 527–547 (RVVTVSTFAAFKWALIRNNSQ) the chain is on the cytoplasmic side. The chain crosses the membrane as a helical span at residues 548–568 (VATTGTAVCINFCIIMLLNVL). Over 569–595 (YEKVALLLTNLEQPRTESEWENSFTLK) the chain is Extracellular. The helical transmembrane segment at 596–616 (MFLFQFVNLNSSTFYIAFFLG) threads the bilayer. Residues 617 to 715 (RFTGHPGAYL…AYGLFDEYLE (99 aa)) are Cytoplasmic-facing. A helical membrane pass occupies residues 716 to 736 (MILQFGFTTIFVAAFPLAPLL). The Extracellular portion of the chain corresponds to 737–768 (ALLNNIIEIRLDAYKFVTQWRRPLASRAKDIG). Residues 769 to 789 (IWYGILEGIGILSVITNAFVI) traverse the membrane as a helical segment. Over 790 to 885 (AITSDFIPRL…QFWHVLAARL (96 aa)) the chain is Cytoplasmic. The chain crosses the membrane as a helical span at residues 886 to 906 (AFIIVFEHLVFCIKHLISYLI). Topologically, residues 907 to 955 (PDLPKDLRDRMRREKYLIQEMMYEAELERLQKERKERKKNGKAHHNEWP) are extracellular.

It belongs to the anoctamin family.

It localises to the cell membrane. The enzyme catalyses a 1,2-diacyl-sn-glycero-3-phospho-L-serine(in) = a 1,2-diacyl-sn-glycero-3-phospho-L-serine(out). The catalysed reaction is a beta-D-galactosyl-(1&lt;-&gt;1')-N-acylsphing-4-enine(out) = a beta-D-galactosyl-(1&lt;-&gt;1')-N-acylsphing-4-enine(in). It carries out the reaction a 1,2-diacyl-sn-glycero-3-phosphocholine(in) = a 1,2-diacyl-sn-glycero-3-phosphocholine(out). In terms of biological role, has calcium-dependent phospholipid scramblase activity; scrambles phosphatidylserine, phosphatidylcholine and galactosylceramide. Does not exhibit calcium-activated chloride channel (CaCC) activity. The sequence is that of Anoctamin-4 (ANO4) from Homo sapiens (Human).